The chain runs to 55 residues: Large ribosomal subunit protein eL40 (55 aa).

The protein belongs to the eukaryotic ribosomal protein eL40 family.

The sequence is that of Large ribosomal subunit protein eL40 from Ignicoccus hospitalis (strain KIN4/I / DSM 18386 / JCM 14125).